The sequence spans 92 residues: DNA-directed RNA polymerase subunit omega (92 aa).

This sequence belongs to the RNA polymerase subunit omega family. The RNAP catalytic core consists of 2 alpha, 1 beta, 1 beta' and 1 omega subunit. When a sigma factor is associated with the core the holoenzyme is formed, which can initiate transcription.

The catalysed reaction is RNA(n) + a ribonucleoside 5'-triphosphate = RNA(n+1) + diphosphate. Promotes RNA polymerase assembly. Latches the N- and C-terminal regions of the beta' subunit thereby facilitating its interaction with the beta and alpha subunits. This Acinetobacter baumannii (strain AB307-0294) protein is DNA-directed RNA polymerase subunit omega.